A 298-amino-acid chain; its full sequence is Phospholipase A1 (298 aa).

Cysteines 4 and 87 form a disulfide. N-linked (GlcNAc...) asparagine glycans are attached at residues Asn-88 and Asn-122. Ser-134 serves as the catalytic Nucleophile. Asp-162 serves as the catalytic Charge relay system. Cystine bridges form between Cys-173–Cys-178 and Cys-216–Cys-225. His-227 acts as the Charge relay system in catalysis. 3 disulfide bridges follow: Cys-242–Cys-266, Cys-243–Cys-291, and Cys-259–Cys-264.

This sequence belongs to the AB hydrolase superfamily. Lipase family. In terms of tissue distribution, expressed by the venom gland.

It is found in the secreted. It catalyses the reaction a 1,2-diacyl-sn-glycero-3-phosphocholine + H2O = a 2-acyl-sn-glycero-3-phosphocholine + a fatty acid + H(+). In terms of biological role, catalyzes the hydrolysis of phosphatidylcholine with phospholipase A1 activity. May act as an allergen and induce hemolytic activity. In Vespula squamosa (Southern yellow jacket), this protein is Phospholipase A1.